Consider the following 566-residue polypeptide: Alpha-amylase (566 aa).

A signal peptide spans 1-28 (MARRLATASLAVLAAAATALTAPTPAAA). Positions 120, 166, and 175 each coordinate Ca(2+). Catalysis depends on Asp205, which acts as the Nucleophile. His209 contributes to the Ca(2+) binding site. Residue Glu232 is the Proton donor of the active site. One can recognise a CBM20 domain in the interval 465–566 (GPGTGQTSAS…ALTLNDTWRG (102 aa)).

Belongs to the glycosyl hydrolase 13 family. In terms of assembly, monomer. It depends on Ca(2+) as a cofactor.

The enzyme catalyses Endohydrolysis of (1-&gt;4)-alpha-D-glucosidic linkages in polysaccharides containing three or more (1-&gt;4)-alpha-linked D-glucose units.. The polypeptide is Alpha-amylase (amy) (Streptomyces griseus).